The following is a 274-amino-acid chain: DNA repair protein Rad1 (274 aa).

It belongs to the rad1 family. Component of the 9-1-1 checkpoint clamp complex consisting of Rad9 isoform A, Rad1 and Hus1-like; the interaction with Hus1-like is direct. Does not interact directly with Rad9; this interaction is probably mediated by Hus1-like. This complex probably also forms with Rad9 isoform B, however 9-1-1 complex containing Rad9 isoform A localizes to the nuclear periphery. Expressed in ovary.

Its subcellular location is the cytoplasm. It localises to the nucleus. The protein resides in the nucleus envelope. This chain is DNA repair protein Rad1, found in Drosophila melanogaster (Fruit fly).